A 341-amino-acid polypeptide reads, in one-letter code: Putative UPF0607 protein FLJ37424 (341 aa).

Disordered stretches follow at residues 72 to 131 (PKTE…NPRP) and 216 to 283 (GLLM…LPCL). Residues 79–101 (EEPKEATEVKDQVETQGQEDNKR) are compositionally biased toward basic and acidic residues. The segment covering 108-127 (EAASTSRPLETQGNLTSSWY) has biased composition (polar residues). Positions 243–252 (AGHRSHKRKL) are enriched in basic residues.

The protein belongs to the UPF0607 family.

The sequence is that of Putative UPF0607 protein FLJ37424 from Homo sapiens (Human).